The sequence spans 451 residues: MTTSDRLQPSFVEVKNTSTLSGTIDLPASKSSSTRALLTAALTPGISTIRNVATGFNSNAMKHNCERLGASFSSEGDTTVVKGVDVMHVDREIVFDPGNSGVVLRLLMGVAGYLPDTRFVTQYRYSLGVRSQAEMVAALRRLNVECEAVGPEARLPISMRSTRALGKHTEVSCKKSSQFLSGLLYLGAIGERDLEIDVVDHITAPSMVHTTINNLAHAGVAVEYDAAFRRFFVPGRDRFKPSEFTVGADPASTAAILALCGSLASDVTLNGFFEEELGSGAVIRYLTDTGTLIDELPGNRIRIRGGASIRAQDFDGSLAPDAVPALAGRAAFAEGTSTFYNIEHIRYKESDRISDFRRELDKLGVRSEEKLDQLIIHGNPRSYRGGAVVDGHYDHGLIMALTTIGLHCEHPVLIKEPHHVGQTYPDYFADIGSIGANVDGLIYPNVAAARA.

Positions 30, 31, and 35 each coordinate 3-phosphoshikimate. Residue Lys-30 participates in phosphoenolpyruvate binding. Phosphoenolpyruvate contacts are provided by Gly-101 and Arg-130. Residues Ser-176, Ser-177, Gln-178, Asp-321, and Lys-348 each coordinate 3-phosphoshikimate. Gln-178 is a phosphoenolpyruvate binding site. Residue Asp-321 is the Proton acceptor of the active site. Residues Arg-352 and Gln-422 each contribute to the phosphoenolpyruvate site.

This sequence belongs to the EPSP synthase family. As to quaternary structure, monomer.

It is found in the cytoplasm. It carries out the reaction 3-phosphoshikimate + phosphoenolpyruvate = 5-O-(1-carboxyvinyl)-3-phosphoshikimate + phosphate. The protein operates within metabolic intermediate biosynthesis; chorismate biosynthesis; chorismate from D-erythrose 4-phosphate and phosphoenolpyruvate: step 6/7. In terms of biological role, catalyzes the transfer of the enolpyruvyl moiety of phosphoenolpyruvate (PEP) to the 5-hydroxyl of shikimate-3-phosphate (S3P) to produce enolpyruvyl shikimate-3-phosphate and inorganic phosphate. The protein is 3-phosphoshikimate 1-carboxyvinyltransferase of Burkholderia pseudomallei (strain K96243).